A 166-amino-acid chain; its full sequence is Bacterial non-heme ferritin (166 aa).

Residues 2-145 (LSKDLLEALN…THIDYLNRIG (144 aa)) enclose the Ferritin-like diiron domain. Residues Glu-17, Glu-50, His-53, Glu-94, and Gln-127 each contribute to the Fe cation site.

This sequence belongs to the ferritin family. Prokaryotic subfamily.

The protein resides in the cytoplasm. It catalyses the reaction 4 Fe(2+) + O2 + 6 H2O = 4 iron(III) oxide-hydroxide + 12 H(+). Iron-storage protein. The polypeptide is Bacterial non-heme ferritin (ftnA) (Staphylococcus haemolyticus (strain JCSC1435)).